A 67-amino-acid polypeptide reads, in one-letter code: Surface composition regulator (67 aa).

This sequence belongs to the GlgS family.

Functionally, major determinant of cell surface composition. Negatively regulates motility, adhesion and synthesis of biofilm exopolysaccharides. The protein is Surface composition regulator of Salmonella enteritidis PT4 (strain P125109).